A 528-amino-acid polypeptide reads, in one-letter code: ATP synthase subunit alpha (528 aa).

Residue 169–176 (GDRQTGKT) participates in ATP binding.

Belongs to the ATPase alpha/beta chains family. F-type ATPases have 2 components, CF(1) - the catalytic core - and CF(0) - the membrane proton channel. CF(1) has five subunits: alpha(3), beta(3), gamma(1), delta(1), epsilon(1). CF(0) has three main subunits: a(1), b(2) and c(9-12). The alpha and beta chains form an alternating ring which encloses part of the gamma chain. CF(1) is attached to CF(0) by a central stalk formed by the gamma and epsilon chains, while a peripheral stalk is formed by the delta and b chains.

It localises to the cell membrane. It carries out the reaction ATP + H2O + 4 H(+)(in) = ADP + phosphate + 5 H(+)(out). Its function is as follows. Produces ATP from ADP in the presence of a proton gradient across the membrane. The alpha chain is a regulatory subunit. This Mycoplasmopsis agalactiae (strain NCTC 10123 / CIP 59.7 / PG2) (Mycoplasma agalactiae) protein is ATP synthase subunit alpha.